The following is a 436-amino-acid chain: UDP-N-acetylmuramate--L-alanine ligase (436 aa).

108 to 114 is a binding site for ATP; that stretch reads GAHGKTS.

It belongs to the MurCDEF family.

Its subcellular location is the cytoplasm. The enzyme catalyses UDP-N-acetyl-alpha-D-muramate + L-alanine + ATP = UDP-N-acetyl-alpha-D-muramoyl-L-alanine + ADP + phosphate + H(+). The protein operates within cell wall biogenesis; peptidoglycan biosynthesis. Its function is as follows. Cell wall formation. This Bacillus cereus (strain Q1) protein is UDP-N-acetylmuramate--L-alanine ligase.